The sequence spans 101 residues: Large ribosomal subunit protein uL23 (101 aa).

It belongs to the universal ribosomal protein uL23 family. In terms of assembly, part of the 50S ribosomal subunit. Contacts protein L29, and trigger factor when it is bound to the ribosome.

One of the early assembly proteins it binds 23S rRNA. One of the proteins that surrounds the polypeptide exit tunnel on the outside of the ribosome. Forms the main docking site for trigger factor binding to the ribosome. The polypeptide is Large ribosomal subunit protein uL23 (Leptospira biflexa serovar Patoc (strain Patoc 1 / Ames)).